The following is a 677-amino-acid chain: MSISWTRNFFERFCVEEYNIDTIKQSSFLSADLLPSLGARINQSTKLRKHIISPFNPRYRAWEMWLVLLVIYSAWICPFQFAFITYKKDAIFIIDNIVNGFFAIDIILTFFVAYLDSHSYLLVDSPKKIAIRYLSTWFAFDVCSTAPFQPLSLLFNYNGSELGFRILSMLRLWRLRRVSSLFARLEKDIRFNYFWIRCTKLISVTLFAIHCAGCFNYLIADRYPNPRKTWIGAVYPNFKEASLWNRYVTALYWSITTLTTTGYGDFHAENPREMLFDIFFMMFNLGLTAYLIGNMTNLVVHWTSRTRTFRDSVRAASEFASRNQLPHDIQDQMLSHICLKFKTEGLKQQETLNNLPKAIRSSIANYLFFPIVHNIYLFQGVSRNFLFQLVSDIDAEYFPPKEDIILQNEAPTDLYILVSGAVDFTVYVDGHDQFQGKAVIGETFGEVGVLYYRPQPFTVRTTELSQILRISRTSLMSAMHAHADDGRVIMNNLFMKLRGQQSIAIDDSNTSGHENRDFKSMGWEEWRDSRKDGYGLDVTNPTSDTALMDAIHKEDTEMVKKILKEQKIERAKVERSSSETAGRSYANDSSKKDPYCSSSNQIIKPCKREEKRVTIHMMSESKNGKLILLPSSIEELLRLASEKFGGCNFTKITNADNAEIDDLDVIWDGDHLYFSSN.

Over Met-1–Glu-63 the chain is Cytoplasmic. The chain crosses the membrane as a helical span at residues Met-64–Ile-84. The Extracellular portion of the chain corresponds to Thr-85 to Ala-90. Residues Ile-91–Phe-111 form a helical membrane-spanning segment. Residues Val-112–Leu-134 are Cytoplasmic-facing. Residues Ser-135–Phe-155 traverse the membrane as a helical segment. Topologically, residues Asn-156–Arg-165 are extracellular. The helical; Voltage-sensor transmembrane segment at Ile-166–Glu-186 threads the bilayer. Residues Lys-187 to Lys-200 lie on the Cytoplasmic side of the membrane. A helical transmembrane segment spans residues Leu-201–Asp-221. Residues Arg-222–Val-248 are Extracellular-facing. Positions Thr-249–Ala-268 form an intramembrane region, pore-forming. The Extracellular segment spans residues Glu-269–Arg-272. Residues Glu-273–Gly-293 traverse the membrane as a helical segment. Residues Asn-294 to Asn-677 lie on the Cytoplasmic side of the membrane. Leu-377 to Lys-496 contacts a nucleoside 3',5'-cyclic phosphate. Positions Ile-568 to Ser-577 are enriched in basic and acidic residues. The interval Ile-568–Gln-601 is disordered. Residues Arg-612–Asn-677 enclose the KHA domain.

The protein belongs to the potassium channel family. Plant (TC 1.A.1.4) subfamily. The potassium channel is probably composed of a homo- or heterotetrameric complex of pore-forming subunits. May interact with AKT2 and KAT2. Interacts with SLAC1 and SLAH3. As to expression, expressed in guard cells, and in roots.

It is found in the membrane. In terms of biological role, highly selective inward-rectifying potassium channel. This voltage-gated channel could mediate long-term potassium influx into guard cells leading to stomatal opening. Assuming opened or closed conformations in response to the voltage difference across the membrane, the channel is activated by hyperpolarization. The channel activity is enhanced upon external acidification. Also permeable to ammonium ions. Blocked by tetraethylammonium and barium ions. The sequence is that of Potassium channel KAT1 (KAT1) from Arabidopsis thaliana (Mouse-ear cress).